The following is a 367-amino-acid chain: Palmitoyltransferase ZDHHC2 (367 aa).

Residues 1–16 (MAPSGPGSSARRRCRR) are Cytoplasmic-facing. A helical transmembrane segment spans residues 17-37 (VLYWIPVVFITLLLGWSYYAY). The Lumenal portion of the chain corresponds to 38-54 (AIQLCIVSMENTGEQVV). Residues 55 to 75 (CLMAYHLLFAMFVWSYWKTIF) traverse the membrane as a helical segment. Topologically, residues 76 to 170 (TLPMNPSKEF…NNCVGFSNYK (95 aa)) are cytoplasmic. In terms of domain architecture, DHHC spans 127 to 177 (RYCDRCQLIKPDRCHHCSVCDKCILKMDHHCPWVNNCVGFSNYKFFLLFLA). Cys-157 functions as the S-palmitoyl cysteine intermediate in the catalytic mechanism. The chain crosses the membrane as a helical span at residues 171-191 (FFLLFLAYSLLYCLFIAATDL). The Lumenal segment spans residues 192–208 (QYFIKFWTNGLPDTQAK). Residues 209 to 229 (FHIMFLFFAAAMFSVSLSSLF) traverse the membrane as a helical segment. Topologically, residues 230–367 (GYHCWLVSKN…NPALTMENET (138 aa)) are cytoplasmic. Residues 299 to 367 (NQDPEQASTP…NPALTMENET (69 aa)) are mediates localization to plasma membrane and recycling endosomes. The segment at 330–367 (ESQSHLLTDSQSWTESSINPGKCKAGMSNPALTMENET) is disordered. Over residues 333–348 (SHLLTDSQSWTESSIN) the composition is skewed to polar residues. The Non-canonical dileucine endocytic signal motif lies at 335–336 (LL). Position 341 is a phosphoserine (Ser-341). The short motif at 358–361 (NPAL) is the NPxY-like endocytic signal element.

Belongs to the DHHC palmitoyltransferase family. As to quaternary structure, monomer. Homodimer. The monomeric form has a higher catalytic activity. Post-translationally, autopalmitoylated. In terms of tissue distribution, ubiquitously expressed. Reduced expression in colorectal cancers with liver metastasis.

Its subcellular location is the postsynaptic density. It localises to the postsynaptic recycling endosome membrane. The protein localises to the cell membrane. The protein resides in the endoplasmic reticulum membrane. It is found in the golgi apparatus membrane. The catalysed reaction is L-cysteinyl-[protein] + hexadecanoyl-CoA = S-hexadecanoyl-L-cysteinyl-[protein] + CoA. It carries out the reaction L-cysteinyl-[protein] + tetradecanoyl-CoA = S-tetradecanoyl-L-cysteinyl-[protein] + CoA. It catalyses the reaction L-cysteinyl-[protein] + octadecanoyl-CoA = S-octadecanoyl-L-cysteinyl-[protein] + CoA. Its function is as follows. Palmitoyltransferase that catalyzes the addition of palmitate onto various protein substrates and is involved in a variety of cellular processes. Has no stringent fatty acid selectivity and in addition to palmitate can also transfer onto target proteins myristate from tetradecanoyl-CoA and stearate from octadecanoyl-CoA. In the nervous system, plays a role in long term synaptic potentiation by palmitoylating AKAP5 through which it regulates protein trafficking from the dendritic recycling endosomes to the plasma membrane and controls both structural and functional plasticity at excitatory synapses. In dendrites, mediates the palmitoylation of DLG4 when synaptic activity decreases and induces synaptic clustering of DLG4 and associated AMPA-type glutamate receptors. Also mediates the de novo and turnover palmitoylation of RGS7BP, a shuttle for Gi/o-specific GTPase-activating proteins/GAPs, promoting its localization to the plasma membrane in response to the activation of G protein-coupled receptors. Through the localization of these GTPase-activating proteins/GAPs, it also probably plays a role in G protein-coupled receptors signaling in neurons. Also probably plays a role in cell adhesion by palmitoylating CD9 and CD151 to regulate their expression and function. Palmitoylates the endoplasmic reticulum protein CKAP4 and regulates its localization to the plasma membrane. Could also palmitoylate LCK and regulate its localization to the plasma membrane. (Microbial infection) Promotes Chikungunya virus (CHIKV) replication by mediating viral nsp1 palmitoylation. The polypeptide is Palmitoyltransferase ZDHHC2 (Homo sapiens (Human)).